Consider the following 351-residue polypeptide: sn-1 oleoyl-lipid 12-desaturase (351 aa).

The next 2 helical transmembrane spans lie at 46–66 (WASV…IIYL) and 68–88 (WYCL…AFVV). The Histidine box-1 signature appears at 90–94 (HDCGH). A helical transmembrane segment spans residues 102 to 122 (WVNDLVGHIAFAPLIYPFHSW). The short motif at 126 to 130 (HDHHH) is the Histidine box-2 element. The next 2 helical transmembrane spans lie at 199–219 (IAVV…TTGV) and 222–242 (FVKF…TFTI). The short motif at 290 to 294 (HHLSV) is the Histidine box-3 element.

The protein belongs to the fatty acid desaturase type 2 family. It depends on Fe(2+) as a cofactor.

Its subcellular location is the membrane. The catalysed reaction is a 1-[(9Z)-octadecenoyl]-2-acyl-glycerolipid + 2 reduced [2Fe-2S]-[ferredoxin] + O2 + 2 H(+) = a 1-[(9Z,12Z)-octadecdienoyl]-2-acyl-glycerolipid + 2 oxidized [2Fe-2S]-[ferredoxin] + 2 H2O. Its pathway is lipid metabolism; polyunsaturated fatty acid biosynthesis. Desaturase involved in fatty acid biosynthesis. Introduces a double bond at carbon 12 of oleoyl groups (18:1) attached to the sn-1 position of the glycerol moiety of membrane glycerolipids. This enzyme is involved in chilling tolerance because the phase transition temperature of lipids of cellular membranes depends on the degree of unsaturation of fatty acids of the membrane lipids. The sequence is that of sn-1 oleoyl-lipid 12-desaturase from Synechocystis sp. (strain ATCC 27184 / PCC 6803 / Kazusa).